The sequence spans 215 residues: Osteoclast-stimulating factor 1 (215 aa).

At S2 the chain carries N-acetylserine. Residues G12–E71 enclose the SH3 domain. ANK repeat units follow at residues S72 to G101, A105 to Q135, and L139 to L168. The segment at K192 to D215 is disordered. T201 is modified (phosphothreonine). Residues S203 and S214 each carry the phosphoserine modification.

Interacts with C-SRC and SMN1. Interacts with FASLG.

It is found in the cytoplasm. Functionally, induces bone resorption, acting probably through a signaling cascade which results in the secretion of factor(s) enhancing osteoclast formation and activity. In Mus musculus (Mouse), this protein is Osteoclast-stimulating factor 1 (Ostf1).